The following is a 546-amino-acid chain: ATP synthase F(1) complex catalytic subunit beta, mitochondrial (546 aa).

The transit peptide at 1-45 (MLGFVGRVAATSASGALRGLGPSPLPQVKVLLRASPAALQSARDY) directs the protein to the mitochondrion. 3 positions are modified to N6-acetyllysine; alternate: K123, K132, and K160. N6-succinyllysine; alternate occurs at positions 123, 132, and 160. K197 is subject to N6-acetyllysine. G208, V209, G210, K211, T212, and V213 together coordinate ADP. Residue G208 participates in ATP binding. The phosphate site is built by G208, V209, G210, K211, and T212. Residues G210, K211, T212, and V213 each coordinate ATP. T212 lines the Mg(2+) pocket. E237 is a binding site for Mg(2+). R238 contributes to the ATP binding site. Residues K258 and K263 each carry the N6-acetyllysine; alternate modification. K258 and K263 each carry N6-succinyllysine; alternate. At T311 the chain carries Phosphothreonine. K425 carries the post-translational modification N6-acetyllysine. S432 is modified (phosphoserine). N6-acetyllysine occurs at positions 479 and 484. At K521 the chain carries N6-acetyllysine; alternate. An N6-succinyllysine; alternate modification is found at K521. Residues 521-546 (KLAEEHSATQTSPSPKGAAAXXXRVV) form a disordered region.

This sequence belongs to the ATPase alpha/beta chains family. In terms of assembly, homotrimer. Component of the ATP synthase complex composed at least of ATP5F1A/subunit alpha, ATP5F1B/subunit beta, ATP5MC1/subunit c (homooctomer), MT-ATP6/subunit a, MT-ATP8/subunit 8, ATP5ME/subunit e, ATP5MF/subunit f, ATP5MG/subunit g, ATP5MK/subunit k, ATP5MJ/subunit j, ATP5F1C/subunit gamma, ATP5F1D/subunit delta, ATP5F1E/subunit epsilon, ATP5PF/subunit F6, ATP5PB/subunit b, ATP5PD/subunit d, ATP5PO/subunit OSCP. ATP synthase complex consists of a soluble F(1) head domain (subunits alpha(3) and beta(3)) - the catalytic core - and a membrane F(0) domain - the membrane proton channel (subunits c, a, 8, e, f, g, k and j). These two domains are linked by a central stalk (subunits gamma, delta, and epsilon) rotating inside the F1 region and a stationary peripheral stalk (subunits F6, b, d, and OSCP). Interacts with PPIF. Interacts with BCL2L1 isoform BCL-X(L); the interaction mediates the association of BCL2L1 isoform BCL-X(L) with the mitochondrial membrane F(1)F(0) ATP synthase and enhances neurons metabolic efficiency. Interacts with CLN5 and PPT1. Interacts with S100A1; this interaction increases F1-ATPase activity. Interacts with MTLN. Interacts with TTC5/STRAP; the interaction results in decreased mitochondrial ATP production.

Its subcellular location is the mitochondrion inner membrane. The enzyme catalyses ATP + H2O + 4 H(+)(in) = ADP + phosphate + 5 H(+)(out). Catalytic subunit beta, of the mitochondrial membrane ATP synthase complex (F(1)F(0) ATP synthase or Complex V) that produces ATP from ADP in the presence of a proton gradient across the membrane which is generated by electron transport complexes of the respiratory chain. ATP synthase complex consist of a soluble F(1) head domain - the catalytic core - and a membrane F(1) domain - the membrane proton channel. These two domains are linked by a central stalk rotating inside the F(1) region and a stationary peripheral stalk. During catalysis, ATP synthesis in the catalytic domain of F(1) is coupled via a rotary mechanism of the central stalk subunits to proton translocation. In vivo, can only synthesize ATP although its ATP hydrolase activity can be activated artificially in vitro. With the subunit alpha (ATP5F1A), forms the catalytic core in the F(1) domain. The protein is ATP synthase F(1) complex catalytic subunit beta, mitochondrial of Canis lupus familiaris (Dog).